A 274-amino-acid polypeptide reads, in one-letter code: HTH-type transcriptional regulator GadX (274 aa).

Positions 145–242 (TRVCTVINNN…GMTPTEYQER (98 aa)) constitute an HTH araC/xylS-type domain. DNA-binding regions (H-T-H motif) lie at residues 162–183 (ARIA…REEG) and 209–232 (IKRV…RNYY).

Homodimer.

Functionally, positively regulates the expression of about fifteen genes involved in acid resistance such as gadA, gadB and gadC. Depending on the conditions (growth phase and medium), can repress gadW. Negatively regulates perA expression in acidic conditions and positively regulates it in alkaline conditions. The chain is HTH-type transcriptional regulator GadX (gadX) from Escherichia coli O127:H6 (strain E2348/69 / EPEC).